A 427-amino-acid polypeptide reads, in one-letter code: Histidine--tRNA ligase (427 aa).

Belongs to the class-II aminoacyl-tRNA synthetase family. As to quaternary structure, homodimer.

It localises to the cytoplasm. It catalyses the reaction tRNA(His) + L-histidine + ATP = L-histidyl-tRNA(His) + AMP + diphosphate + H(+). This Lacticaseibacillus casei (strain BL23) (Lactobacillus casei) protein is Histidine--tRNA ligase.